The chain runs to 263 residues: 1-(5-phosphoribosyl)-5-[(5-phosphoribosylamino)methylideneamino] imidazole-4-carboxamide isomerase (263 aa).

This sequence belongs to the HisA/HisF family.

It localises to the cytoplasm. It carries out the reaction 1-(5-phospho-beta-D-ribosyl)-5-[(5-phospho-beta-D-ribosylamino)methylideneamino]imidazole-4-carboxamide = 5-[(5-phospho-1-deoxy-D-ribulos-1-ylimino)methylamino]-1-(5-phospho-beta-D-ribosyl)imidazole-4-carboxamide. The protein operates within amino-acid biosynthesis; L-histidine biosynthesis; L-histidine from 5-phospho-alpha-D-ribose 1-diphosphate: step 4/9. This chain is 1-(5-phosphoribosyl)-5-[(5-phosphoribosylamino)methylideneamino] imidazole-4-carboxamide isomerase (HIS6), found in Eremothecium gossypii (strain ATCC 10895 / CBS 109.51 / FGSC 9923 / NRRL Y-1056) (Yeast).